Reading from the N-terminus, the 440-residue chain is Alpha-methylserine aldolase (440 aa).

Position 255 is an N6-(pyridoxal phosphate)lysine (Lys255).

Belongs to the SHMT family. Alpha-methylserine aldolase subfamily. Homodimer. It depends on pyridoxal 5'-phosphate as a cofactor.

The enzyme catalyses 2-methyl-L-serine = formaldehyde + L-alanine. It carries out the reaction 2-ethyl-L-serine = (2S)-2-aminobutanoate + formaldehyde. In the alpha-methyl-L-serine synthesis reaction, activity is inhibited by an excess amount of formaldehyde (at a concentration greater than 4 mM). Formaldehyde release activity is reduced by the sulfhydryl reagent N-ethylmaleimide, iodoacetate amide and iodoacetic acid, but not by dithiothreitol and 2-mercaptoethanol. Activity is enhanced by 1 mM of manganese chloride. Catalyzes the reversible interconversion of alpha-methyl-L-serine to L-alanine and formaldehyde. Can also catalyze the synthesis of alpha-ethyl-L-serine from L-2-aminobutyric acid and formaldehyde. Also shows low alanine racemase activity. Cannot use alpha-methyl-D-serine, L-serine, D-serine, (S)-2-amino-1-propanol, (R)-2-amino-1-propanol, (S)-alpha-hydroxymethyltyrosine, (R)-alpha-hydroxymethyltyrosine, alpha-iso-butyl-DL-serine, alpha-iso-propyl-DL-serine or alpha-benzyl-DL-serine. Cannot use D-alanine instead of L-alanine as the substrate for alpha-methyl-L-serine synthesis. Does not require tetrahydrofolate (THF) for activity. The chain is Alpha-methylserine aldolase from Variovorax paradoxus.